Consider the following 194-residue polypeptide: Holliday junction branch migration complex subunit RuvA (194 aa).

The interval 1–64 (MISRLTGKLV…EDAHLLFGFA (64 aa)) is domain I. A domain II region spans residues 65-143 (TAEERKTFRQ…AHTVTDGLFA (79 aa)). Positions 144 to 147 (AAPA) are flexible linker. Positions 147–194 (AADETEDIVSTLLALGYSEREAKAAVKGVPEGTDVGEGVRLALKNLLK) are domain III.

Belongs to the RuvA family. As to quaternary structure, homotetramer. Forms an RuvA(8)-RuvB(12)-Holliday junction (HJ) complex. HJ DNA is sandwiched between 2 RuvA tetramers; dsDNA enters through RuvA and exits via RuvB. An RuvB hexamer assembles on each DNA strand where it exits the tetramer. Each RuvB hexamer is contacted by two RuvA subunits (via domain III) on 2 adjacent RuvB subunits; this complex drives branch migration. In the full resolvosome a probable DNA-RuvA(4)-RuvB(12)-RuvC(2) complex forms which resolves the HJ.

Its subcellular location is the cytoplasm. Its function is as follows. The RuvA-RuvB-RuvC complex processes Holliday junction (HJ) DNA during genetic recombination and DNA repair, while the RuvA-RuvB complex plays an important role in the rescue of blocked DNA replication forks via replication fork reversal (RFR). RuvA specifically binds to HJ cruciform DNA, conferring on it an open structure. The RuvB hexamer acts as an ATP-dependent pump, pulling dsDNA into and through the RuvAB complex. HJ branch migration allows RuvC to scan DNA until it finds its consensus sequence, where it cleaves and resolves the cruciform DNA. The chain is Holliday junction branch migration complex subunit RuvA from Neisseria meningitidis serogroup C (strain 053442).